Consider the following 492-residue polypeptide: N-succinylglutamate 5-semialdehyde dehydrogenase (492 aa).

220–225 is an NAD(+) binding site; the sequence is GSASTG. Residues glutamate 243 and cysteine 277 contribute to the active site.

It belongs to the aldehyde dehydrogenase family. AstD subfamily.

It carries out the reaction N-succinyl-L-glutamate 5-semialdehyde + NAD(+) + H2O = N-succinyl-L-glutamate + NADH + 2 H(+). It functions in the pathway amino-acid degradation; L-arginine degradation via AST pathway; L-glutamate and succinate from L-arginine: step 4/5. Its function is as follows. Catalyzes the NAD-dependent reduction of succinylglutamate semialdehyde into succinylglutamate. The polypeptide is N-succinylglutamate 5-semialdehyde dehydrogenase (Salmonella schwarzengrund (strain CVM19633)).